The following is a 178-amino-acid chain: Fatty-acid and retinol-binding protein 1 (178 aa).

The N-terminal stretch at 1-16 (MYHQLILMALIGVIMA) is a signal peptide. 2 N-linked (GlcNAc...) asparagine glycosylation sites follow: N44 and N75. Coiled coils occupy residues 67–89 (DAAL…ELRN) and 122–154 (QKLD…LKAT). Residue N157 is glycosylated (N-linked (GlcNAc...) asparagine).

This sequence belongs to the fatty-acid and retinol-binding protein (FARBP) family. Post-translationally, N-glycosylated.

The protein localises to the secreted. Binds retinol and different fatty acids. The sequence is that of Fatty-acid and retinol-binding protein 1 from Onchocerca ochengi (Filarial nematode worm).